Consider the following 218-residue polypeptide: Ribonuclease HII (218 aa).

An RNase H type-2 domain is found at 22 to 211 (VRIAGVDEAG…VRAALESRFS (190 aa)). Positions 28, 29, and 119 each coordinate a divalent metal cation.

It belongs to the RNase HII family. Mn(2+) serves as cofactor. Mg(2+) is required as a cofactor.

It localises to the cytoplasm. The catalysed reaction is Endonucleolytic cleavage to 5'-phosphomonoester.. Functionally, endonuclease that specifically degrades the RNA of RNA-DNA hybrids. The polypeptide is Ribonuclease HII (Maricaulis maris (strain MCS10) (Caulobacter maris)).